The following is a 254-amino-acid chain: Putative electron transfer flavoprotein subunit YdiQ (254 aa).

This sequence belongs to the ETF beta-subunit/FixA family. As to quaternary structure, ydiR and YdiQ form a heterodimer.

Functionally, may play a role in a redox process. The protein is Putative electron transfer flavoprotein subunit YdiQ (ydiQ) of Escherichia coli (strain K12).